A 147-amino-acid polypeptide reads, in one-letter code: Large ribosomal subunit protein bL9 (147 aa).

This sequence belongs to the bacterial ribosomal protein bL9 family.

Binds to the 23S rRNA. The chain is Large ribosomal subunit protein bL9 from Caldanaerobacter subterraneus subsp. tengcongensis (strain DSM 15242 / JCM 11007 / NBRC 100824 / MB4) (Thermoanaerobacter tengcongensis).